A 259-amino-acid chain; its full sequence is MALSTLWLVLMLWTSLFSDSQCSTLSQAELQELEQIHTWVVSRSFPCSVTCGLGLLTQELCPIGVTRNISTSSCKLRTISCLDSWQCGLKTQTATVGRRLVLDCLEEVMEAMGRFSFVVSWRFAFAIITTDDSLFTRYEALSLDKVVLDPLREEDSGTYRCDVLDTGKRRVKRMYKGVKVLSPKDLSLDFAQGLIHWEIPESRFANLTSSRKVYSSSTIRNIVIISVPLSFAIAVVIFIFLFCYSRRARRAAHLCQDNI.

The N-terminal stretch at 1–18 (MALSTLWLVLMLWTSLFS) is a signal peptide. Over 19 to 221 (DSQCSTLSQA…KVYSSSTIRN (203 aa)) the chain is Extracellular. Positions 97 to 172 (GRRLVLDCLE…VLDTGKRRVK (76 aa)) constitute an Ig-like domain. C104 and C161 form a disulfide bridge. The chain crosses the membrane as a helical span at residues 222–242 (IVIISVPLSFAIAVVIFIFLF). Residues 243–259 (CYSRRARRAAHLCQDNI) are Cytoplasmic-facing.

Forms a complex with izumo1 and spaca6 on spermatocyte cell membrane. The complex binds to oocyte protein bncr. As to expression, expressed in sperm.

The protein resides in the cell membrane. Functionally, essential fertilization factor required for male fertility. Part of a conserved trimeric sperm complex with the essential fertilization factors IZUMO1 and SPACA6 which bridges sperm and oocyte membranes during fertilization by binding to IZUMO1R/JUNO on the oocyte. This chain is Transmembrane protein 81, found in Danio rerio (Zebrafish).